The primary structure comprises 842 residues: MSEYNFTKIEKKWQNYWDKHKTYKVNEDPNIPKEKRIYILDMFPYPSANGLHVGHPEGYTATDILTRYKLLNGFNVLHPMGFDSFGLPAENYAIQTGEHPKKITEKNIEKFKEQIKALGFAYDWDREIRTHDENYYKWTQWIFLKLYKKGLAYIKEMPVWYCPDLGTVLSNEEVIQTPDGPRSERGFHKVQRKPLRQWVLKITEYAERLIKDLEEIDWPESVKEMQKNWIGKSIGAEIEFSIKASKEKIKVFTTRPDTIFGVTYLVLAPEHNIVDKITKDELKTIIAEYKDKEILKSDLERTSLEKDKTGVFTGAYAINPITEEEIPIWIGSYVLGIYGTGAVMSVPAHDERDFEFAKKYNLPIKQVVSQTGNNEILTKPFTENGISINTPEEFNNLKTEKVKTKVIEWLTKNKKGQKKVNYKLRDWIFSRQRYWGEPIPIIIDDDLNEIPLEEDELPLRLPEIENYKPSDTGESPLSKVQNWVNVKRNGKIYKRETNTMPQWAGSCWYYIRYLDPNNEKEFASKEKINYWMPVDLYIGGAEHSVLHLLYARFWHKVLYDLGYVNTKEPFKKLINQGMITSFAYQDENGILIPNDEVKKRDNKFFSKTNNKELKQIIAKMSKSLKNIINPDDIIKEYGADSMRIYEMFMGPLTDSKPWNTQGLIGIFRFLNKIWAIKNKELTKESAAKEIISGLHKTIKKVTEDIENLNFNTAISSLMIFINELLKHDKNYLEIFKPLTIILAPFAPHLGEELWEYMGEQPSIFKNAKWPKYDPNLIIDNTREIVLQVNGKIKDKIILNKGINEDTLKDIALKNHKIMQNIQNKQIIKIITVKDKLINIVTK.

The short motif at 44 to 55 is the 'HIGH' region element; the sequence is PYPSANGLHVGH. The 'KMSKS' region signature appears at 619 to 623; that stretch reads KMSKS. An ATP-binding site is contributed by Lys-622.

The protein belongs to the class-I aminoacyl-tRNA synthetase family.

The protein localises to the cytoplasm. The enzyme catalyses tRNA(Leu) + L-leucine + ATP = L-leucyl-tRNA(Leu) + AMP + diphosphate. In Borrelia turicatae (strain 91E135), this protein is Leucine--tRNA ligase.